Here is a 171-residue protein sequence, read N- to C-terminus: CASP-like protein 5A2 (171 aa).

Topologically, residues 1 to 39 (MDGSAHLRDPPGPAVLRWRLEDMHIIPGTSGSLALRICQ) are cytoplasmic. Residues 40–60 (FSAAIVSFSVMISAANFSSVT) traverse the membrane as a helical segment. Residue Ala-61 is a topological domain, extracellular. Residues 62–82 (FCFLVAAMVLQCMWSLSVATI) traverse the membrane as a helical segment. The Cytoplasmic segment spans residues 83 to 106 (EGYAMLVGRSLRDSPLLSLFAVGD). A helical transmembrane segment spans residues 107–127 (WVTAVITFAGACASAGIAVLV). Topologically, residues 128 to 148 (GRDIHRGCDVNFCGRYAAAAG) are extracellular. Residues 149-169 (MAFLSWLLISTSFLFTFWLLA) form a helical membrane-spanning segment. The Cytoplasmic segment spans residues 170-171 (TR).

Belongs to the Casparian strip membrane proteins (CASP) family. Homodimer and heterodimers.

It is found in the cell membrane. In Pteridium aquilinum subsp. aquilinum (Bracken fern), this protein is CASP-like protein 5A2.